The following is a 365-amino-acid chain: Alanine racemase (365 aa).

K32 functions as the Proton acceptor; specific for D-alanine in the catalytic mechanism. K32 bears the N6-(pyridoxal phosphate)lysine mark. Position 128 (R128) interacts with substrate. Y257 acts as the Proton acceptor; specific for L-alanine in catalysis. Substrate is bound at residue M305.

The protein belongs to the alanine racemase family. It depends on pyridoxal 5'-phosphate as a cofactor.

The catalysed reaction is L-alanine = D-alanine. It functions in the pathway amino-acid biosynthesis; D-alanine biosynthesis; D-alanine from L-alanine: step 1/1. In terms of biological role, catalyzes the interconversion of L-alanine and D-alanine. May also act on other amino acids. This chain is Alanine racemase (alr), found in Francisella tularensis subsp. tularensis (strain SCHU S4 / Schu 4).